Reading from the N-terminus, the 64-residue chain is MPKMKTKSGAAKRFKKTANGFKHKHAFKSHILTKMTTKRKRQLRGCSQVHPSDVAKVERMLRVR.

The disordered stretch occupies residues M1–H23.

This sequence belongs to the bacterial ribosomal protein bL35 family.

In Stutzerimonas stutzeri (strain A1501) (Pseudomonas stutzeri), this protein is Large ribosomal subunit protein bL35.